We begin with the raw amino-acid sequence, 534 residues long: Zinc finger protein 69 homolog B (534 aa).

Residues K37 and K40 each participate in a glycyl lysine isopeptide (Lys-Gly) (interchain with G-Cter in SUMO2) cross-link. Positions 74–145 (LTFKDVSVDF…ERDISGVPSS (72 aa)) constitute a KRAB domain. Residues K178 and K235 each participate in a glycyl lysine isopeptide (Lys-Gly) (interchain with G-Cter in SUMO2) cross-link. 9 consecutive C2H2-type zinc fingers follow at residues 279–301 (FECN…MRIH), 307–329 (FRCK…QRIH), 335–357 (YECK…VRIH), 363–385 (YECR…LRTH), 391–413 (FTCK…EIIH), 419–441 (YICN…QRTH), 447–469 (YKCK…QRVH), 475–497 (YECS…QRIH), and 503–525 (YDCN…CKTH).

It belongs to the krueppel C2H2-type zinc-finger protein family.

Its subcellular location is the nucleus. Its function is as follows. May be involved in transcriptional regulation. Essential for Golgi structural integrity. The sequence is that of Zinc finger protein 69 homolog B (ZFP69B) from Homo sapiens (Human).